The following is a 67-amino-acid chain: MSHVSVIAARLLVWVGILLCLGVPQLWANPIYLYEPSANKSTRAPQVLGVPPEVYAFTVSCKACWLP.

The first 28 residues, 1–28 (MSHVSVIAARLLVWVGILLCLGVPQLWA), serve as a signal peptide directing secretion. N-linked (GlcNAc...) asparagine; by host glycosylation is present at Asn39.

This is an uncharacterized protein from Invertebrate iridescent virus 3 (IIV-3).